The primary structure comprises 1284 residues: Peroxisomal ATPase PEX1 (1284 aa).

Residues 339-373 (SPKQQQDKSKQGVLLPDKEKQLSKSPDHKQISSNR) are disordered. The segment covering 343 to 373 (QQDKSKQGVLLPDKEKQLSKSPDHKQISSNR) has biased composition (basic and acidic residues). ATP is bound by residues 600-607 (GGKGSGKS) and 882-889 (GPPGTGKT). Residues Ser1182, Ser1210, and Ser1212 each carry the phosphoserine modification. The interval 1261–1284 (FQNPKKRKNQSGTVFRTGQKVTLA) is disordered. The segment covering 1270–1284 (QSGTVFRTGQKVTLA) has biased composition (polar residues).

It belongs to the AAA ATPase family. As to quaternary structure, homooligomer; homooligomerizes in the cytosol, interaction with PEX6 promotes dissociation of the homooligomer. Interacts with PEX6; forming the PEX1-PEX6 AAA ATPase complex, which is composed of a heterohexamer formed by a trimer of PEX1-PEX6 dimers. Interacts indirectly with PEX26, via its interaction with PEX6.

It is found in the cytoplasm. The protein resides in the cytosol. Its subcellular location is the peroxisome membrane. The enzyme catalyses ATP + H2O = ADP + phosphate + H(+). Functionally, component of the PEX1-PEX6 AAA ATPase complex, a protein dislocase complex that mediates the ATP-dependent extraction of the PEX5 receptor from peroxisomal membranes, an essential step for PEX5 recycling. Specifically recognizes PEX5 monoubiquitinated at 'Cys-11', and pulls it out of the peroxisome lumen through the PEX2-PEX10-PEX12 retrotranslocation channel. Extraction by the PEX1-PEX6 AAA ATPase complex is accompanied by unfolding of the TPR repeats and release of bound cargo from PEX5. The sequence is that of Peroxisomal ATPase PEX1 from Mus musculus (Mouse).